The sequence spans 469 residues: UDP-N-acetylmuramate--L-alanine ligase (469 aa).

112–118 (GTHGKTT) is an ATP binding site.

The protein belongs to the MurCDEF family.

It localises to the cytoplasm. The catalysed reaction is UDP-N-acetyl-alpha-D-muramate + L-alanine + ATP = UDP-N-acetyl-alpha-D-muramoyl-L-alanine + ADP + phosphate + H(+). The protein operates within cell wall biogenesis; peptidoglycan biosynthesis. Its function is as follows. Cell wall formation. The protein is UDP-N-acetylmuramate--L-alanine ligase of Herminiimonas arsenicoxydans.